Reading from the N-terminus, the 370-residue chain is Cytochrome b (370 aa).

The next 4 helical transmembrane spans lie at 25–45 (FGSMLLACSTLQVLTGFFLAV), 69–90 (WLMQNLHAIGASMFFICIYIHI), 105–125 (WLSGTTLLIMLMATAFFGYVL), and 170–190 (FFALHFILPFGIISLSSLHIL). Residues H75 and H89 each coordinate heme b. Residues H174 and H188 each coordinate heme b. H193 lines the a ubiquinone pocket. A run of 4 helical transmembrane segments spans residues 218 to 238 (YKDLLMLAMLTTLLLMIVSFF), 280 to 300 (LGGALALTMSIMILLTVPFTH), 312 to 332 (LMQLMFWTFAATFLVISWSST), and 339 to 358 (FTTISQAAALMYFLFFISKP).

Belongs to the cytochrome b family. In terms of assembly, the cytochrome bc1 complex contains 3 respiratory subunits (MT-CYB, CYC1 and UQCRFS1), 2 core proteins (UQCRC1 and UQCRC2) and probably 6 low-molecular weight proteins. Heme b serves as cofactor.

Its subcellular location is the mitochondrion inner membrane. In terms of biological role, component of the ubiquinol-cytochrome c reductase complex (complex III or cytochrome b-c1 complex) that is part of the mitochondrial respiratory chain. The b-c1 complex mediates electron transfer from ubiquinol to cytochrome c. Contributes to the generation of a proton gradient across the mitochondrial membrane that is then used for ATP synthesis. This chain is Cytochrome b (MT-CYB), found in Chilabothrus subflavus (Jamaican yellow boa).